A 350-amino-acid chain; its full sequence is Histidinol-phosphate aminotransferase (350 aa).

Lysine 209 carries the N6-(pyridoxal phosphate)lysine modification.

The protein belongs to the class-II pyridoxal-phosphate-dependent aminotransferase family. Histidinol-phosphate aminotransferase subfamily. Homodimer. The cofactor is pyridoxal 5'-phosphate.

It catalyses the reaction L-histidinol phosphate + 2-oxoglutarate = 3-(imidazol-4-yl)-2-oxopropyl phosphate + L-glutamate. The protein operates within amino-acid biosynthesis; L-histidine biosynthesis; L-histidine from 5-phospho-alpha-D-ribose 1-diphosphate: step 7/9. The protein is Histidinol-phosphate aminotransferase of Christiangramia forsetii (strain DSM 17595 / CGMCC 1.15422 / KT0803) (Gramella forsetii).